Reading from the N-terminus, the 104-residue chain is Pyrimidine/purine nucleoside phosphorylase (104 aa).

The protein belongs to the nucleoside phosphorylase PpnP family.

It catalyses the reaction a purine D-ribonucleoside + phosphate = a purine nucleobase + alpha-D-ribose 1-phosphate. The enzyme catalyses adenosine + phosphate = alpha-D-ribose 1-phosphate + adenine. The catalysed reaction is cytidine + phosphate = cytosine + alpha-D-ribose 1-phosphate. It carries out the reaction guanosine + phosphate = alpha-D-ribose 1-phosphate + guanine. It catalyses the reaction inosine + phosphate = alpha-D-ribose 1-phosphate + hypoxanthine. The enzyme catalyses thymidine + phosphate = 2-deoxy-alpha-D-ribose 1-phosphate + thymine. The catalysed reaction is uridine + phosphate = alpha-D-ribose 1-phosphate + uracil. It carries out the reaction xanthosine + phosphate = alpha-D-ribose 1-phosphate + xanthine. In terms of biological role, catalyzes the phosphorolysis of diverse nucleosides, yielding D-ribose 1-phosphate and the respective free bases. Can use uridine, adenosine, guanosine, cytidine, thymidine, inosine and xanthosine as substrates. Also catalyzes the reverse reactions. The sequence is that of Pyrimidine/purine nucleoside phosphorylase from Geobacter sulfurreducens (strain ATCC 51573 / DSM 12127 / PCA).